The chain runs to 554 residues: Solute carrier family 22 member 22 (554 aa).

Residues 1–15 (MDFDEILHHVGDSGR) are Cytoplasmic-facing. The helical transmembrane segment at 16–36 (FQICMIILLNILSLVLSPHDV) threads the bilayer. The Extracellular portion of the chain corresponds to 37 to 144 (LENFTAAIPA…DLVCDFQSFK (108 aa)). Asn39 carries an N-linked (GlcNAc...) asparagine glycan. The helical transmembrane segment at 145–165 (YYAQATSLAGHLVSCPLSGII) threads the bilayer. The Cytoplasmic portion of the chain corresponds to 166-172 (SDRFGRK). Residues 173 to 193 (PLLMYCSLAYGAVGTYCAFAP) form a helical membrane-spanning segment. Residue Asn194 is glycosylated (N-linked (GlcNAc...) asparagine). Over 194–199 (NFSVYC) the chain is Extracellular. A helical membrane pass occupies residues 200–220 (VLRFLLSAFQSTILINSLILV). At 221-231 (LEEASVQWHPT) the chain is on the cytoplasmic side. A helical membrane pass occupies residues 232–252 (IIVLSGLFNSIGQGVLGGLAY). The Extracellular segment spans residues 253 to 258 (VISDWH). The helical transmembrane segment at 259–279 (LLQLAYALPFFIFFVLFCWVP) threads the bilayer. Residues 280 to 347 (ESVRWLIITG…DIFINPLIRK (68 aa)) are Cytoplasmic-facing. Residues 348–368 (IVLSNSSLLFAELFSFVGLLL) form a helical membrane-spanning segment. Residues 369-376 (DVQLLGKN) lie on the Extracellular side of the membrane. The helical transmembrane segment at 377–397 (MFLTQIFLGAIDVPSKSLTYF) threads the bilayer. Residues 398 to 405 (TIRNVSRR) are Cytoplasmic-facing. A helical membrane pass occupies residues 406 to 426 (PLIAFLLLTTGSCITITIFIS). Over 427-434 (EEMYVLRT) the chain is Extracellular. The helical transmembrane segment at 435–455 (IIFILGKGCFAAFTCISTTYI) threads the bilayer. The Cytoplasmic segment spans residues 456–466 (NELSPVELRST). The helical transmembrane segment at 467–487 (LNGVFLAVVRLAGVLSALTLA) threads the bilayer. Residues 488–491 (TRKY) lie on the Extracellular side of the membrane. The chain crosses the membrane as a helical span at residues 492 to 512 (FVYLPMILYGVLPIVATISIL). Over 513-554 (FLPETFNLPHTDIIKDMEKRKRLMSKNISKKEGQDFLETTEC) the chain is Cytoplasmic.

This sequence belongs to the major facilitator (TC 2.A.1) superfamily. Organic cation transporter (TC 2.A.1.19) family. Specifically expressed in kidney where it is found in proximal convoluted tubules (at protein level). Colocalizes with the prostaglandin-inactivating enzyme HPGD in kidney (at protein level). Not detected in other tissues tested.

The protein resides in the basolateral cell membrane. Its function is as follows. Sodium-independent organic anion transporter which exhibits high specificity for a subset of prostaglandins including prostaglandin E2 (PGE2), prostaglandin E1 (PGE1), prostaglandin F2-alpha (PGF2-alpha) and prostaglandin D2 (PGD2). The chain is Solute carrier family 22 member 22 from Mus musculus (Mouse).